Here is a 370-residue protein sequence, read N- to C-terminus: Queuine tRNA-ribosyltransferase (370 aa).

The Proton acceptor role is filled by D93. Substrate is bound by residues 93–97 (DSGGF), D147, Q190, and G217. Residues 248-254 (GVGTPDY) are RNA binding. D267 functions as the Nucleophile in the catalytic mechanism. Residues 272 to 276 (TRVAR) form an RNA binding; important for wobble base 34 recognition region. Zn(2+) is bound by residues C305, C307, C310, and H336.

It belongs to the queuine tRNA-ribosyltransferase family. As to quaternary structure, homodimer. Within each dimer, one monomer is responsible for RNA recognition and catalysis, while the other monomer binds to the replacement base PreQ1. Zn(2+) is required as a cofactor.

It catalyses the reaction 7-aminomethyl-7-carbaguanine + guanosine(34) in tRNA = 7-aminomethyl-7-carbaguanosine(34) in tRNA + guanine. Its pathway is tRNA modification; tRNA-queuosine biosynthesis. Functionally, catalyzes the base-exchange of a guanine (G) residue with the queuine precursor 7-aminomethyl-7-deazaguanine (PreQ1) at position 34 (anticodon wobble position) in tRNAs with GU(N) anticodons (tRNA-Asp, -Asn, -His and -Tyr). Catalysis occurs through a double-displacement mechanism. The nucleophile active site attacks the C1' of nucleotide 34 to detach the guanine base from the RNA, forming a covalent enzyme-RNA intermediate. The proton acceptor active site deprotonates the incoming PreQ1, allowing a nucleophilic attack on the C1' of the ribose to form the product. After dissociation, two additional enzymatic reactions on the tRNA convert PreQ1 to queuine (Q), resulting in the hypermodified nucleoside queuosine (7-(((4,5-cis-dihydroxy-2-cyclopenten-1-yl)amino)methyl)-7-deazaguanosine). This chain is Queuine tRNA-ribosyltransferase, found in Natranaerobius thermophilus (strain ATCC BAA-1301 / DSM 18059 / JW/NM-WN-LF).